A 538-amino-acid polypeptide reads, in one-letter code: Syncytin-1 (538 aa).

Residues 1–20 form the signal peptide; sequence MALPYHILLFTVLLPSFTLT. The Extracellular segment spans residues 21–443; sequence APPPCRCMTS…NTGPWGLLSQ (423 aa). Asn-169 carries N-linked (GlcNAc...) asparagine glycosylation. Residues 186–189 carry the CXXC motif; that stretch reads CWIC. 3 cysteine pairs are disulfide-bonded: Cys-186-Cys-189, Cys-186-Cys-405, and Cys-397-Cys-404. 4 N-linked (GlcNAc...) asparagine glycosylation sites follow: Asn-208, Asn-214, Asn-234, and Asn-281. Residues 320-340 are fusion peptide; that stretch reads ILPFVIGAGVLGALGTGIGGI. An immunosuppression region spans residues 380–396; that stretch reads LQNRRALDLLTAERGGT. A CX6CC motif is present at residues 397 to 405; it reads CLFLGEECC. Residue Asn-409 is glycosylated (N-linked (GlcNAc...) asparagine). Residues 444-464 traverse the membrane as a helical segment; that stretch reads WMPWILPFLGPLAAIILLLLF. The interval 465 to 484 is essential for the fusiogenic function; it reads GPCIFNLLVNFVSSRIEAVK. At 465 to 538 the chain is on the cytoplasmic side; it reads GPCIFNLLVN…LLRPNSAGSS (74 aa). The segment at 496–538 is disordered; it reads KIYRRPLDRPASPRSDVNDIKCTPPEEISTAQPLLRPNSAGSS.

The protein belongs to the gamma type-C retroviral envelope protein family. HERV class-I W env subfamily. In terms of assembly, the mature envelope protein (Env) consists of a trimer of SU-TM heterodimers attached probably by a labile interchain disulfide bond. Interacts with the C-type lectin CD209/DC-SIGN. In terms of processing, specific enzymatic cleavages in vivo yield mature proteins. Envelope glycoproteins are synthesized as an inactive precursor that is heavily N-glycosylated and processed likely by furin in the Golgi to yield the mature SU and TM proteins. The cleavage site between SU and TM requires the minimal sequence [KR]-X-[KR]-R. The CXXC motif is highly conserved across a broad range of retroviral envelope proteins. It is thought to participate in the formation of a labile disulfide bond possibly with the CX6CC motif present in the transmembrane protein.

It is found in the cell membrane. The protein localises to the virion. Its function is as follows. This endogenous retroviral envelope protein has retained its original fusogenic properties and participates in trophoblast fusion and the formation of a syncytium during placenta morphogenesis. May recognize and induce fusion through binding of SLC1A4 and SLC1A5. In terms of biological role, endogenous envelope proteins may have kept, lost or modified their original function during evolution. Retroviral envelope proteins mediate receptor recognition and membrane fusion during early infection. The surface protein (SU) mediates receptor recognition, while the transmembrane protein (TM) acts as a class I viral fusion protein. The protein may have at least 3 conformational states: pre-fusion native state, pre-hairpin intermediate state, and post-fusion hairpin state. During viral and target cell membrane fusion, the coiled coil regions (heptad repeats) assume a trimer-of-hairpins structure, positioning the fusion peptide in close proximity to the C-terminal region of the ectodomain. The formation of this structure appears to drive apposition and subsequent fusion of membranes. In Gorilla gorilla gorilla (Western lowland gorilla), this protein is Syncytin-1 (ERVW-1).